A 339-amino-acid chain; its full sequence is Fructose-1,6-bisphosphatase isozyme 2 (339 aa).

Residues 3-10 (DRSPFETD) form an important for interaction with ALDOA region. AMP-binding positions include Val18 and 28-32 (TGELT). Residues Asp69 and Glu98 each coordinate Mg(2+). 113–114 (KY) provides a ligand contact to AMP. Mg(2+) contacts are provided by Asp119, Leu121, and Asp122. Asp122 serves as a coordination point for substrate. Position 141 (Arg141) interacts with AMP. A Nuclear localization signal motif is present at residues 204 to 208 (KKKGK). 213–216 (NEGY) provides a ligand contact to substrate. 2 positions are modified to phosphotyrosine: Tyr216 and Tyr219. Residues 245 to 249 (YVGSM), Tyr265, and Lys275 contribute to the substrate site. Mg(2+) is bound at residue Glu281.

The protein belongs to the FBPase class 1 family. In terms of assembly, homotetramer. Interacts with ALDOA; the interaction blocks inhibition by physiological concentrations of AMP and reduces inhibition by Ca(2+). Interacts with alpha-actinin and F-actin. Requires Mg(2+) as cofactor.

The protein resides in the cell junction. Its subcellular location is the cytoplasm. It localises to the nucleus. It is found in the myofibril. The protein localises to the sarcomere. The protein resides in the z line. The catalysed reaction is beta-D-fructose 1,6-bisphosphate + H2O = beta-D-fructose 6-phosphate + phosphate. Its pathway is carbohydrate biosynthesis; gluconeogenesis. With respect to regulation, subject to complex allosteric regulation. The enzyme can assume an active R-state, or an inactive T-state. Intermediate conformations may exist. AMP acts as an allosteric inhibitor. Fructose 2,6-bisphosphate acts as a competitive inhibitor. Strongly inhibited by Ca(2+). Catalyzes the hydrolysis of fructose 1,6-bisphosphate to fructose 6-phosphate in the presence of divalent cations and probably participates in glycogen synthesis from carbohydrate precursors, such as lactate. The polypeptide is Fructose-1,6-bisphosphatase isozyme 2 (FBP2) (Bos taurus (Bovine)).